Reading from the N-terminus, the 193-residue chain is CRIB domain-containing protein RIC5 (193 aa).

The CRIB domain occupies 29–42 (IGIPTDVKHVAHIG). Positions 42–193 (GWEGPSATTP…CAGLGSSTGR (152 aa)) are disordered. Residues 55 to 67 (HDFKPTDQTKTET) show a composition bias toward basic and acidic residues. Over residues 90 to 100 (STGNNSPTESP) the composition is skewed to polar residues. Residues 123-134 (GSGSESGSGLEL) are compositionally biased toward low complexity.

In terms of assembly, interacts with ARAC11/ROP1. As to expression, expressed in flowers and pollen.

The protein resides in the cell membrane. Functions as a downstream effector of Rho-related GTP binding proteins of the 'Rho of Plants' (ROPs) family. Participates in the propagation of ROP GTPase signals in specific cellular responses. Is involved in pollen tube growth regulation through its interaction with ARAC11/ROP1. This chain is CRIB domain-containing protein RIC5 (RIC5), found in Arabidopsis thaliana (Mouse-ear cress).